The sequence spans 347 residues: NADH-ubiquinone oxidoreductase chain 2 (347 aa).

A run of 11 helical transmembrane segments spans residues 3–23, 25–45, 59–79, 96–116, 122–142, 149–169, 178–198, 201–221, 237–257, 274–294, and 323–343; these read PPIL…VMTS, HWML…PILM, YFLT…INLL, ILMT…FWVP, ISLS…LSVL, INPN…GWGG, IMAY…LYNP, MFLN…LFMI, APLI…LPPL, EMII…YFYM, and MIFL…TPMI.

The protein belongs to the complex I subunit 2 family. Core subunit of respiratory chain NADH dehydrogenase (Complex I) which is composed of 45 different subunits. Interacts with TMEM242.

It localises to the mitochondrion inner membrane. It carries out the reaction a ubiquinone + NADH + 5 H(+)(in) = a ubiquinol + NAD(+) + 4 H(+)(out). In terms of biological role, core subunit of the mitochondrial membrane respiratory chain NADH dehydrogenase (Complex I) which catalyzes electron transfer from NADH through the respiratory chain, using ubiquinone as an electron acceptor. Essential for the catalytic activity and assembly of complex I. This is NADH-ubiquinone oxidoreductase chain 2 from Civettictis civetta (African civet).